The primary structure comprises 354 residues: Uroporphyrinogen decarboxylase (354 aa).

Substrate contacts are provided by residues 27-31, Asp-77, Tyr-154, Thr-209, and His-327; that span reads RQAGR.

This sequence belongs to the uroporphyrinogen decarboxylase family. Homodimer.

It localises to the cytoplasm. The enzyme catalyses uroporphyrinogen III + 4 H(+) = coproporphyrinogen III + 4 CO2. The protein operates within porphyrin-containing compound metabolism; protoporphyrin-IX biosynthesis; coproporphyrinogen-III from 5-aminolevulinate: step 4/4. In terms of biological role, catalyzes the decarboxylation of four acetate groups of uroporphyrinogen-III to yield coproporphyrinogen-III. This Escherichia coli O6:K15:H31 (strain 536 / UPEC) protein is Uroporphyrinogen decarboxylase.